We begin with the raw amino-acid sequence, 317 residues long: E3 ubiquitin-protein ligase NRDP1 (317 aa).

An RING-type; degenerate zinc finger spans residues 18 to 57; that stretch reads CPICSGVLEEPVQAPHCEHAFCNACITQWFSQQQTCPVDR. The stretch at 135–175 forms a coiled coil; that stretch reads IKHLRSVVQQQQIRIGELEKTAAESKHQLSEQKRDIQLLKA.

The catalysed reaction is S-ubiquitinyl-[E2 ubiquitin-conjugating enzyme]-L-cysteine + [acceptor protein]-L-lysine = [E2 ubiquitin-conjugating enzyme]-L-cysteine + N(6)-ubiquitinyl-[acceptor protein]-L-lysine.. It participates in protein modification; protein ubiquitination. Acts as E3 ubiquitin-protein ligase and regulates the degradation of target proteins. The sequence is that of E3 ubiquitin-protein ligase NRDP1 (rnf41) from Xenopus laevis (African clawed frog).